Here is a 114-residue protein sequence, read N- to C-terminus: Fumarate reductase subunit D (114 aa).

3 helical membrane passes run 27 to 47, 50 to 70, and 94 to 114; these read ICFP…LVPV, IVAF…TIFP, and WVFY…VIAL.

The protein belongs to the FrdD family. As to quaternary structure, part of an enzyme complex containing four subunits: a flavoprotein (FrdA), an iron-sulfur protein (FrdB), and two hydrophobic anchor proteins (FrdC and FrdD).

The protein resides in the cell inner membrane. Anchors the catalytic components of the fumarate reductase complex to the cell membrane, binds quinones. This chain is Fumarate reductase subunit D, found in Actinobacillus pleuropneumoniae serotype 3 (strain JL03).